A 355-amino-acid polypeptide reads, in one-letter code: MVQRLQSALVGTPEGGIRLSTTEIVPDITGDSVLVKTKAVSVNPVDTKMIGPYVTPGAVAGFDFAGVVEQVGPEATKCDIHVGDRVCTAIMGMNPLDPHVGAFSEYTAAVEWILLKIPPHLSFEEGASLGISFMTTGLALFKSLGLPGNPIEPATEPMPVLVYGGSSATGTAAVQLVKLAGFEPIATCSPRNFDLVKSYGASAVFDYQDPNCTSDIRKHTKNKIKYALDCISTTSSMQFCYQAIGRAGGKYTALEPYSEAVARTRKVVKPDWIMGPQMLGKEIRWPEPHWRPANAEMGEFGVYWTAVLRRLLDKGLIRPHHIVVKQGGLAEVLHGIEDIREKRISGKKLVFQMEI.

Residue 45-48 (VDTK) coordinates NADP(+). 131-138 (ISFMTTGL) contacts substrate. Residues 166 to 169 (SSAT), 189 to 192 (SPRN), Tyr207, and 254 to 255 (LE) contribute to the NADP(+) site. 275–279 (GPQML) serves as a coordination point for substrate. 344–345 (IS) serves as a coordination point for NADP(+).

The protein belongs to the zinc-containing alcohol dehydrogenase family. In terms of assembly, monomer.

The catalysed reaction is L-serine + 7 malonyl-CoA + acetyl-CoA + 2 S-adenosyl-L-methionine + ATP + 8 NADPH + 11 H(+) = (5S)-3-[(2E,6R,8E,10E,12E)-2,6-dimethyltetradeca-2,8,10,12-tetraenoyl]-5-(hydroxymethyl)pyrrolidine-2,4-dione + AMP + 2 S-adenosyl-L-homocysteine + 7 CO2 + diphosphate + 8 NADP(+) + 8 CoA + 6 H2O. The protein operates within mycotoxin biosynthesis. In terms of biological role, hybrid PKS-NRPS synthetase; part of the gene cluster that mediates the biosynthesis of trichosetin, a trans-fused decalin-containing tetramic acid with antimicrobial activity. The PKS module of PKS-NRPS1 together with the enoylreductase (ER) catalyze the formation of the polyketide unit which is then conjugated to L-serine by the condensation domain of the PKS-NRPS1 NRPS module. Activity of the Dieckmann cyclase domain (RED) results in release of the Dieckmann product intermediate. Diels-Alderase (DA) is involved in endo-selective Diels-Alder cycloaddition to form the decalin ring, leading to the production of N-desmethylequisetin also called trichosetin. The cluster does not contain the equisetin N-methyltransferase and consequently, trichosetin is isolated as final product. The protein is Trans-enoyl reductase of Gibberella fujikuroi (strain CBS 195.34 / IMI 58289 / NRRL A-6831) (Bakanae and foot rot disease fungus).